Reading from the N-terminus, the 147-residue chain is Large ribosomal subunit protein uL13 (147 aa).

Belongs to the universal ribosomal protein uL13 family. As to quaternary structure, part of the 50S ribosomal subunit.

In terms of biological role, this protein is one of the early assembly proteins of the 50S ribosomal subunit, although it is not seen to bind rRNA by itself. It is important during the early stages of 50S assembly. The chain is Large ribosomal subunit protein uL13 from Frankia casuarinae (strain DSM 45818 / CECT 9043 / HFP020203 / CcI3).